We begin with the raw amino-acid sequence, 374 residues long: 4-hydroxy-3-methylbut-2-en-1-yl diphosphate synthase (flavodoxin) (374 aa).

[4Fe-4S] cluster-binding residues include C268, C271, C303, and E310.

Belongs to the IspG family. Requires [4Fe-4S] cluster as cofactor.

It carries out the reaction (2E)-4-hydroxy-3-methylbut-2-enyl diphosphate + oxidized [flavodoxin] + H2O + 2 H(+) = 2-C-methyl-D-erythritol 2,4-cyclic diphosphate + reduced [flavodoxin]. The protein operates within isoprenoid biosynthesis; isopentenyl diphosphate biosynthesis via DXP pathway; isopentenyl diphosphate from 1-deoxy-D-xylulose 5-phosphate: step 5/6. Converts 2C-methyl-D-erythritol 2,4-cyclodiphosphate (ME-2,4cPP) into 1-hydroxy-2-methyl-2-(E)-butenyl 4-diphosphate. The sequence is that of 4-hydroxy-3-methylbut-2-en-1-yl diphosphate synthase (flavodoxin) from Geobacillus kaustophilus (strain HTA426).